The sequence spans 198 residues: Nucleoid occlusion factor SlmA (198 aa).

The region spanning 10 to 70 (NRREEILQSL…SLIEFIEDSL (61 aa)) is the HTH tetR-type domain. Positions 33–52 (TTAKLAASVGVSEAALYRHF) form a DNA-binding region, H-T-H motif. The stretch at 117-144 (EQDRLQGRINQLFERIEAQLRQVLREKR) forms a coiled coil.

Belongs to the nucleoid occlusion factor SlmA family. As to quaternary structure, homodimer. Interacts with FtsZ.

It is found in the cytoplasm. It localises to the nucleoid. Its function is as follows. Required for nucleoid occlusion (NO) phenomenon, which prevents Z-ring formation and cell division over the nucleoid. Acts as a DNA-associated cell division inhibitor that binds simultaneously chromosomal DNA and FtsZ, and disrupts the assembly of FtsZ polymers. SlmA-DNA-binding sequences (SBS) are dispersed on non-Ter regions of the chromosome, preventing FtsZ polymerization at these regions. The chain is Nucleoid occlusion factor SlmA from Escherichia coli O45:K1 (strain S88 / ExPEC).